Here is a 1143-residue protein sequence, read N- to C-terminus: MAATSPHLTSIPQAVRVAASIDPSIDPGLKQQAIDYLTKVKQLSEETWQDCLQLYLQGAGAPGPSTTGRDGKEKLETDMRMFCLQVVDTVLIQKPEVMGADAVQGMYEAIVEFIQVEYIGGSCEGGQGFLRNKLAFTISQLFLRAFPSHIPTFLHPFFALLSPPTSSPPNLHPQLLTIRLLLEIAQEIHDTTLKTARIMTKERQERDGVVRDVIRSSGDDKTAVQGMLGIIEKGLEQMNSGNSSDKWAEAVDATLKTLSAWIPWIDLGVALNPTTLPFYHRLLHQPILSFRTATAGIYRTLVAKGIQDPSSRLQVLRVLAPVAVIDPLETETRGGKSEEVATFRASLGVVLSAYGVALIGISDNTEVAEQLRNEAEEMMNPALPLLLRFLSDRQYEVPLSVSPFVSDLLRIYKRMYKPPNPSTKAGQAPSPPSTLPQLSPERRQFLASMLDILIRQLAWPEDTEWEAPGNEDELDEDIAAFKNFRGSCRSFIESIAQIDKSLHTEVVARIVIATLDAYASGGGAAAVPWQQAELAMHLVYTFGEVSKNSTRAAFYELPPEMATKAARNKLRAAQGSGRTTPSSSDNVDLGPSSNNDRLEYEQFPLSPLGQLLTRCMTSGISSYPHPSVTLQYFEIIVRYIEFWKAKPETLPGLFEALLDGQGIHNSDEGVRRRCFYLFSKLCKDCRNDTVEGMVSPILDSMRDMMVINAELPPTDTPDEDPLIKATTGKSYVADQLYLFEASGNLVYLTKADPAKQMALLEAVAGPLLSGLGSGVERARVDENDLQAVLQVHHHLMALGHFAKGFPIVPDKLVELLPYTGPFKQMAEALLQAIEILKRRRVVRDAARFAFSQFANAIGTPVAELVPRFVSAVVTEFEPSELVDFLLFLQLLMHRLQGSTFETMDMLLLPLLSRIFTVLQQPVTGTDEAQVHARLKDAYLAFFTSLMNENLDGIFITDRNKPEFENVLTTLFNLTQDYSDGASQRLAFGFFSRSVIAWGTSPEAAARPSVFAESAMASQSKMVSGGGTAQPNAHAVTQEQRAKQCLPGYENFIYQRLLPAAFEVPANSQFNIRGGQLIVHEAAVLVRNTVQARGQEAIDFMLSDLLRRLNCPSDIANQLIASLTTQQAKDFKKTFFDFIKAMRG.

The segment at Ala566–Ser593 is disordered. Residues Ser576 to Ser593 are compositionally biased toward polar residues.

The protein belongs to the exportin family.

Its subcellular location is the nucleus. It localises to the cytoplasm. Its function is as follows. tRNA nucleus export receptor which facilitates tRNA translocation across the nuclear pore complex. Involved in pre-tRNA splicing, probably by affecting the interaction of pre-tRNA with splicing endonuclease. The polypeptide is Exportin-T (LOS1) (Cryptococcus neoformans var. neoformans serotype D (strain JEC21 / ATCC MYA-565) (Filobasidiella neoformans)).